A 266-amino-acid polypeptide reads, in one-letter code: Undecaprenyl-diphosphatase (266 aa).

Helical transmembrane passes span 4–24 (ILRV…PISS), 39–59 (LPIV…IIYY), 88–108 (LNLI…GIFI), 114–134 (LFTF…LFLI), 147–167 (IFFS…PGIS), 186–206 (SLEI…FLKY), 214–234 (IIFN…FGLF), and 246–266 (SKLY…YFLV).

The protein belongs to the UppP family.

The protein localises to the cell inner membrane. The catalysed reaction is di-trans,octa-cis-undecaprenyl diphosphate + H2O = di-trans,octa-cis-undecaprenyl phosphate + phosphate + H(+). Its function is as follows. Catalyzes the dephosphorylation of undecaprenyl diphosphate (UPP). Confers resistance to bacitracin. The polypeptide is Undecaprenyl-diphosphatase (Borrelia recurrentis (strain A1)).